A 230-amino-acid chain; its full sequence is Ribonuclease 3 (230 aa).

An RNase III domain is found at L7–G134. E47 lines the Mg(2+) pocket. D51 is a catalytic residue. D120 and E123 together coordinate Mg(2+). E123 is an active-site residue. A DRBM domain is found at D161–N230.

It belongs to the ribonuclease III family. In terms of assembly, homodimer. Requires Mg(2+) as cofactor.

It localises to the cytoplasm. It carries out the reaction Endonucleolytic cleavage to 5'-phosphomonoester.. Functionally, digests double-stranded RNA. Involved in the processing of primary rRNA transcript to yield the immediate precursors to the large and small rRNAs (23S and 16S). Processes some mRNAs, and tRNAs when they are encoded in the rRNA operon. Processes pre-crRNA and tracrRNA of type II CRISPR loci if present in the organism. This Clostridium acetobutylicum (strain ATCC 824 / DSM 792 / JCM 1419 / IAM 19013 / LMG 5710 / NBRC 13948 / NRRL B-527 / VKM B-1787 / 2291 / W) protein is Ribonuclease 3.